Consider the following 282-residue polypeptide: Biotin synthase (282 aa).

Residues 1-228 (MQEIFLCSIS…NARLMVAGGR (228 aa)) enclose the Radical SAM core domain. [4Fe-4S] cluster is bound by residues cysteine 17, cysteine 21, and cysteine 24. [2Fe-2S] cluster-binding residues include cysteine 61, cysteine 96, cysteine 154, and arginine 221.

It belongs to the radical SAM superfamily. Biotin synthase family. In terms of assembly, homodimer. [4Fe-4S] cluster is required as a cofactor. [2Fe-2S] cluster serves as cofactor.

The catalysed reaction is (4R,5S)-dethiobiotin + (sulfur carrier)-SH + 2 reduced [2Fe-2S]-[ferredoxin] + 2 S-adenosyl-L-methionine = (sulfur carrier)-H + biotin + 2 5'-deoxyadenosine + 2 L-methionine + 2 oxidized [2Fe-2S]-[ferredoxin]. The protein operates within cofactor biosynthesis; biotin biosynthesis; biotin from 7,8-diaminononanoate: step 2/2. Its function is as follows. Catalyzes the conversion of dethiobiotin (DTB) to biotin by the insertion of a sulfur atom into dethiobiotin via a radical-based mechanism. The polypeptide is Biotin synthase (Helicobacter pylori (strain P12)).